The chain runs to 148 residues: Glyoxalase domain-containing protein 5 (148 aa).

One can recognise a VOC domain in the interval 25–145; that stretch reads RLDHIVMTVK…DRNLLEVSSY (121 aa).

This sequence belongs to the glyoxalase I family.

This is Glyoxalase domain-containing protein 5 (Glod5) from Mus musculus (Mouse).